The sequence spans 172 residues: Small t antigen (172 aa).

Met1 is subject to N-acetylmethionine; by host. Residues 12–75 enclose the J domain; sequence ELMDLLGLER…VKVAHQPDFG (64 aa). Residues 101-114 form a C4-type; atypical zinc finger; it reads CSKKPSVHCPCMLC. The H1C3-type; atypical zinc finger occupies 120–141; the sequence is HLNRKFLRKEPLVWIDCYCIDC.

As to quaternary structure, interacts with host PPP2R1A; the interaction inhibits PP2A activity.

It localises to the host cytoplasm. The protein resides in the host nucleus. Promotes efficient viral genome replication by accelerating both G1 and S phase progression of the cell cycle. Inhibits host PP2A by binding to the A subunit, thereby displacing lower affinity regulatory B subunit. Inactivation of PP2A in turn results in the transactivation of cyclin A and cyclin D1 promoters. Late during the infection cycle, ST may induce dephosphorylation of host MTOR, leading to the inhibition of cap-dependent translation. May establish and maintain high levels of viral genomes during persistent infection in cell culture. The sequence is that of Small t antigen from BK polyomavirus (strain AS) (BKPyV).